A 471-amino-acid chain; its full sequence is 3-isopropylmalate dehydratase large subunit (471 aa).

[4Fe-4S] cluster contacts are provided by Cys347, Cys407, and Cys410.

Belongs to the aconitase/IPM isomerase family. LeuC type 1 subfamily. In terms of assembly, heterodimer of LeuC and LeuD. [4Fe-4S] cluster serves as cofactor.

It catalyses the reaction (2R,3S)-3-isopropylmalate = (2S)-2-isopropylmalate. The protein operates within amino-acid biosynthesis; L-leucine biosynthesis; L-leucine from 3-methyl-2-oxobutanoate: step 2/4. In terms of biological role, catalyzes the isomerization between 2-isopropylmalate and 3-isopropylmalate, via the formation of 2-isopropylmaleate. In Prochlorococcus marinus (strain MIT 9211), this protein is 3-isopropylmalate dehydratase large subunit.